We begin with the raw amino-acid sequence, 617 residues long: Melatonin-related receptor (617 aa).

Residues 1–30 are Extracellular-facing; that stretch reads MGPTLAVPTPYGCIGCKLPQPEYPPALIIF. The helical transmembrane segment at 31–51 threads the bilayer; that stretch reads MFCAMVITIVVDLIGNSMVIL. Residues 52 to 64 are Cytoplasmic-facing; that stretch reads AVTKNKKLRNSGN. Residues 65 to 85 form a helical membrane-spanning segment; it reads IFVVSLSVADMLVAIYPYPLM. The Extracellular portion of the chain corresponds to 86 to 103; the sequence is LHAMSIGGWDLSQLQCQM. A disulfide bridge links Cys101 with Cys178. A helical transmembrane segment spans residues 104 to 124; it reads VGFITGLSVVGSIFNIVAIAI. Topologically, residues 125-143 are cytoplasmic; the sequence is NRYCYICHSLQYERIFSVR. Residues 144–164 form a helical membrane-spanning segment; that stretch reads NTCIYLVITWIMTVLAVLPNM. Over 165 to 188 the chain is Extracellular; that stretch reads YIGTIEYDPRTYTCIFNYLNNPVF. A helical membrane pass occupies residues 189 to 209; that stretch reads TVTIVCIHFVLPLLIVGFCYV. Over 210–239 the chain is Cytoplasmic; that stretch reads RIWTKVLAARDPAGQNPDNQLAEVRNFLTM. A helical transmembrane segment spans residues 240–260; sequence FVIFLLFAVCWCPINVLTVLV. The Extracellular segment spans residues 261 to 273; it reads AVSPKEMAGKIPN. A helical membrane pass occupies residues 274–294; that stretch reads WLYLAAYFIAYFNSCLNAVIY. Over 295-617 the chain is Cytoplasmic; the sequence is GLLNENFRRE…VEDDPDEMAV (323 aa). 2 disordered regions span residues 340-438 and 464-596; these read AHAR…ATVY and SVHF…VTTS. The segment covering 341–353 has biased composition (basic and acidic residues); sequence HARDQAREQDRAH. Residues 485–500 are compositionally biased toward polar residues; the sequence is GSHSKSAFSAATSHPK.

It belongs to the G-protein coupled receptor 1 family. In terms of assembly, homodimer, and heterodimer with MTNR1A and MTNR1B. Interacts with KAT5. Interacts with RTN4 isoform A/NOGO-A. Interacts with TGFBR1. As to quaternary structure, interacts with GTF2I. Post-translationally, cleaved by CAPN1 in a calcium-dependent manner. Hypothalamus and pituitary.

It localises to the cell membrane. Its subcellular location is the postsynaptic density. The protein resides in the nucleus. Its function is as follows. G protein-coupled receptor that plays a role in numerous physiological processes including regulation of energy metabolism, neurite outgrowth or cell migration. Promotes self-renewal and neuronal differentiation of neural progenitor cells through activation of the NOTCH and WNT/beta-catenin signaling pathways. Modulates the KAT5-dependent glucocorticoid receptor signaling by modulating KAT5 subcellular compartmentalisation. Also plays a role in the activation TGFBR1 in the absence of TGFBR2 by interfering with FKBP1A binding to TGFBR1, leading to induction of both canonical and non-canonical SMAD signaling pathways resulting in inhibition of proliferation or promotion of migration. Upon cleavage by CAPN1, functions as a scaffold in the nucleus for interacting partners such as GTF2I to promote FOS promoter activation. This is Melatonin-related receptor (GPR50) from Homo sapiens (Human).